The sequence spans 212 residues: Protein GrpE (212 aa).

The segment at 1 to 68 (MAETSNNKTS…ELESAKKEIE (68 aa)) is disordered. The segment covering 9–30 (TSEEAKANEKKSQSETLEESKL) has biased composition (basic and acidic residues). Residues 40–60 (ETTQTESMETAETETSLQTEL) show a composition bias toward low complexity.

This sequence belongs to the GrpE family. As to quaternary structure, homodimer.

It localises to the cytoplasm. Functionally, participates actively in the response to hyperosmotic and heat shock by preventing the aggregation of stress-denatured proteins, in association with DnaK and GrpE. It is the nucleotide exchange factor for DnaK and may function as a thermosensor. Unfolded proteins bind initially to DnaJ; upon interaction with the DnaJ-bound protein, DnaK hydrolyzes its bound ATP, resulting in the formation of a stable complex. GrpE releases ADP from DnaK; ATP binding to DnaK triggers the release of the substrate protein, thus completing the reaction cycle. Several rounds of ATP-dependent interactions between DnaJ, DnaK and GrpE are required for fully efficient folding. This is Protein GrpE from Leptospira interrogans serogroup Icterohaemorrhagiae serovar copenhageni (strain Fiocruz L1-130).